A 1030-amino-acid chain; its full sequence is F-box/WD repeat-containing protein 10 (1030 aa).

The region spanning 280–329 (RDFIRDLPLHLSKYILRMLDKHSLNRCIFVSQHWATLAQQVKVDQSMHSF) is the F-box domain. 5 WD repeats span residues 466-505 (GHAGSVRALFLSEEDNILLSGSYDLSIRYWDVKTGACVRI), 508-547 (GHQGTITCLDVYKNRLVSGAKDGQVKEWDIETGKCLKTFK), 549-584 (KDPILAAKISETYIVSSCERGIVKVWHVVTAQLQKT), 587-624 (GHEGAVKCLFFNEWHLVSGGADGLVMAWSMVGKYERCL), and 626-667 (AFKH…KVIK). The tract at residues 709–773 (KNKVKKSKDK…LSSDDMETPV (65 aa)) is disordered. Residues 716–733 (KDKEEEREETSLGDEHSR) are compositionally biased toward basic and acidic residues. Over residues 734–749 (STIQGHSLKDSVSSKQ) the composition is skewed to polar residues. Residues 963–992 (FMLMTVKEEKEFAEAKMKEYEASVSTKEVD) adopt a coiled-coil conformation.

In terms of biological role, probable substrate-recognition component of a SCF (SKP1-CUL1-F-box protein)-type E3 ubiquitin ligase complex which mediates the ubiquitination and subsequent proteasomal degradation of target proteins. Overexpression is leading to degradation of CBX5 and CBX1. This Mus musculus (Mouse) protein is F-box/WD repeat-containing protein 10 (Fbxw10).